The chain runs to 342 residues: Manganese-dependent ADP-ribose/CDP-alcohol diphosphatase (342 aa).

Met-1 is modified (N-acetylmethionine). Residues Asp-25, Gln-27, Asp-74, Asn-110, His-241, His-278, and His-280 each contribute to the Zn(2+) site.

This sequence belongs to the ADPRibase-Mn family. In terms of assembly, monomer. Mg(2+) serves as cofactor.

The catalysed reaction is CDP-choline + H2O = phosphocholine + CMP + 2 H(+). It catalyses the reaction ADP-D-ribose + H2O = D-ribose 5-phosphate + AMP + 2 H(+). It carries out the reaction CDP-glycerol + H2O = sn-glycerol 3-phosphate + CMP + 2 H(+). Its function is as follows. Hydrolyzes ADP-ribose, IDP-ribose, CDP-glycerol, CDP-choline and CDP-ethanolamine, but not other non-reducing ADP-sugars or CDP-glucose. May be involved in immune cell signaling as suggested by the second-messenger role of ADP-ribose, which activates TRPM2 as a mediator of oxidative/nitrosative stress. This is Manganese-dependent ADP-ribose/CDP-alcohol diphosphatase (ADPRM) from Homo sapiens (Human).